The sequence spans 141 residues: Large ribosomal subunit protein uL16 (141 aa).

The protein belongs to the universal ribosomal protein uL16 family. Part of the 50S ribosomal subunit.

In terms of biological role, binds 23S rRNA and is also seen to make contacts with the A and possibly P site tRNAs. The chain is Large ribosomal subunit protein uL16 from Campylobacter hominis (strain ATCC BAA-381 / DSM 21671 / CCUG 45161 / LMG 19568 / NCTC 13146 / CH001A).